The following is a 301-amino-acid chain: Sulfate adenylyltransferase subunit 2 (301 aa).

The protein belongs to the PAPS reductase family. CysD subfamily. As to quaternary structure, heterodimer composed of CysD, the smaller subunit, and CysN.

It catalyses the reaction sulfate + ATP + H(+) = adenosine 5'-phosphosulfate + diphosphate. It participates in sulfur metabolism; hydrogen sulfide biosynthesis; sulfite from sulfate: step 1/3. Functionally, with CysN forms the ATP sulfurylase (ATPS) that catalyzes the adenylation of sulfate producing adenosine 5'-phosphosulfate (APS) and diphosphate, the first enzymatic step in sulfur assimilation pathway. APS synthesis involves the formation of a high-energy phosphoric-sulfuric acid anhydride bond driven by GTP hydrolysis by CysN coupled to ATP hydrolysis by CysD. This Shewanella woodyi (strain ATCC 51908 / MS32) protein is Sulfate adenylyltransferase subunit 2.